A 167-amino-acid polypeptide reads, in one-letter code: 6,7-dimethyl-8-ribityllumazine synthase (167 aa).

Residues phenylalanine 26, 60 to 62 (AFE), and 89 to 91 (AVI) contribute to the 5-amino-6-(D-ribitylamino)uracil site. 94–95 (ET) contacts (2S)-2-hydroxy-3-oxobutyl phosphate. Histidine 97 (proton donor) is an active-site residue. Phenylalanine 122 serves as a coordination point for 5-amino-6-(D-ribitylamino)uracil. Arginine 136 provides a ligand contact to (2S)-2-hydroxy-3-oxobutyl phosphate.

This sequence belongs to the DMRL synthase family. Forms an icosahedral capsid composed of 60 subunits, arranged as a dodecamer of pentamers.

The enzyme catalyses (2S)-2-hydroxy-3-oxobutyl phosphate + 5-amino-6-(D-ribitylamino)uracil = 6,7-dimethyl-8-(1-D-ribityl)lumazine + phosphate + 2 H2O + H(+). Its pathway is cofactor biosynthesis; riboflavin biosynthesis; riboflavin from 2-hydroxy-3-oxobutyl phosphate and 5-amino-6-(D-ribitylamino)uracil: step 1/2. Catalyzes the formation of 6,7-dimethyl-8-ribityllumazine by condensation of 5-amino-6-(D-ribitylamino)uracil with 3,4-dihydroxy-2-butanone 4-phosphate. This is the penultimate step in the biosynthesis of riboflavin. This chain is 6,7-dimethyl-8-ribityllumazine synthase, found in Vesicomyosocius okutanii subsp. Calyptogena okutanii (strain HA).